Reading from the N-terminus, the 301-residue chain is tRNA dimethylallyltransferase (301 aa).

Position 9 to 16 (9 to 16 (GPTASGKS)) interacts with ATP. 11–16 (TASGKS) is a substrate binding site. Positions 34-37 (DSMQ) are interaction with substrate tRNA.

It belongs to the IPP transferase family. Monomer. Mg(2+) is required as a cofactor.

It carries out the reaction adenosine(37) in tRNA + dimethylallyl diphosphate = N(6)-dimethylallyladenosine(37) in tRNA + diphosphate. Its function is as follows. Catalyzes the transfer of a dimethylallyl group onto the adenine at position 37 in tRNAs that read codons beginning with uridine, leading to the formation of N6-(dimethylallyl)adenosine (i(6)A). In Corynebacterium glutamicum (strain R), this protein is tRNA dimethylallyltransferase.